A 1783-amino-acid polypeptide reads, in one-letter code: 6-methylsalicylic acid synthase (1783 aa).

The span at Met-1–Gly-31 shows a compositional bias: polar residues. Residues Met-1–Leu-40 form a disordered region. One can recognise a Ketosynthase family 3 (KS3) domain in the interval His-45–Ala-474. Residues Cys-217, His-352, and His-394 each act as for beta-ketoacyl synthase activity in the active site. Residues Trp-587–Ala-884 form a malonyl-CoA:ACP transacylase (MAT) domain region. The For acyl/malonyl transferase activity role is filled by Ser-673. Positions Thr-942–Leu-1215 are product template (PT) domain. Residues Asn-948 to Ser-1064 are N-terminal hotdog fold. The 269-residue stretch at Asn-948–Ser-1216 folds into the PKS/mFAS DH domain. Catalysis depends on His-980, which acts as the Proton acceptor; for dehydratase activity. A C-terminal hotdog fold region spans residues Pro-1078–Ser-1216. Asp-1130 acts as the Proton donor; for dehydratase activity in catalysis. In terms of domain architecture, Carrier spans Glu-1707–Leu-1781. Ser-1741 bears the O-(pantetheine 4'-phosphoryl)serine mark.

The catalysed reaction is 3 malonyl-CoA + acetyl-CoA + NADPH + 3 H(+) = 6-methylsalicylate + 3 CO2 + NADP(+) + 4 CoA + H2O. It participates in secondary metabolite biosynthesis; terpenoid biosynthesis. In terms of biological role, non-reducing polyketide synthase; part of the gene cluster that mediates the biosynthesis of macrophorins, isoprenoid epoxycyclohexenones containing cyclized drimane moieties. The first step of the pathway is the synthesis of 6-methylsalicylic acid (6-MSA) by the polyketide synthase macA. 6-MSA is then converted to m-cresol by the decarboxylase macB. The cytochrome P450 monooxygenase macC then catalyzes the oxidation of m-cresol to toluquinol. Epoxidation of toluquinol is then performed by the short chain dehydrogenase macD, with the help of macE, and a further prenylation by macG leads to 7-deacetoxyyanuthone A. The next step is the hydroxylation of C-22 of 7-deacetoxyyanuthone A by the cytochrome P450 monooxygenase macH to yield 22-deacetylyanuthone A. O-Mevalon transferase macI then attaches mevalon to the hydroxyl group of 22-deacetylyanuthone A to produce yanuthone E. The terpene cyclase macJ catalyzes the cyclization of 22-deacetylyanuthone A to macrophorin A. MacJ is also able to catalyze cyclization of yanuthone E and 7-deacetoxyyanuthone A to their corresponding macrophorins. The macJ products can be further modified by macH and macJ, as well as by the FAD-dependent monooxygenase macF, to produce additional macrophorins, including 4'-oxomacrophorin A, 4'-oxomacrophorin D and 4'-oxomacrophorin E. This is 6-methylsalicylic acid synthase from Penicillium terrestre.